The sequence spans 112 residues: Putative pterin-4-alpha-carbinolamine dehydratase (112 aa).

It belongs to the pterin-4-alpha-carbinolamine dehydratase family.

It catalyses the reaction (4aS,6R)-4a-hydroxy-L-erythro-5,6,7,8-tetrahydrobiopterin = (6R)-L-erythro-6,7-dihydrobiopterin + H2O. In Hahella chejuensis (strain KCTC 2396), this protein is Putative pterin-4-alpha-carbinolamine dehydratase.